A 192-amino-acid polypeptide reads, in one-letter code: Hydrogenase expression/formation protein HupD (192 aa).

Ni(2+) is bound by residues E23, D69, and H100.

This sequence belongs to the peptidase A31 family.

Not known. Could be involved in the processing of hydrogenase. This chain is Hydrogenase expression/formation protein HupD (hupD), found in Bradyrhizobium diazoefficiens (strain JCM 10833 / BCRC 13528 / IAM 13628 / NBRC 14792 / USDA 110).